The following is a 20-amino-acid chain: RGSXLTIHPLRNIRDFFYVG.

It belongs to the peptidase A1 family. Post-translationally, N-glycosylated. Expressed in chorionic epithelium (trophectoderm).

Its subcellular location is the secreted. This Bubalus bubalis (Domestic water buffalo) protein is Pregnancy-associated glycoprotein 75.